The chain runs to 76 residues: MFTMKKSLLLLFFLGTISLSLCEEERSADEDDGEKGVKRGIFSLIKTAAKFVGKNLLKQAGKAGVEHLACKANNQC.

The N-terminal stretch at 1 to 22 (MFTMKKSLLLLFFLGTISLSLC) is a signal peptide. Residues 23 to 39 (EEERSADEDDGEKGVKR) constitute a propeptide that is removed on maturation. C70 and C76 are joined by a disulfide.

As to expression, expressed by the skin glands.

The protein localises to the secreted. In terms of biological role, antimicrobial peptide with activity against Gram-positive and Gram-negative bacteria and against fungi. Has been tested against S.aureus (MIC=1.25 ug/mL), B.pumilus (MIC=2.5 ug/mL), B.cereus (MIC=7.5 ug/mL), E.coli (MIC=12.5 ug/mL), B.dysenteriae (MIC=7.5 ug/mL), A.cacoaceticus (MIC=12.5 ug/mL), P.aeruginosa (MIC=50.0 ug/mL) and C.albicans (MIC=2.5 ug/mL). Also shows a weak hemolytic activity. In Amolops loloensis (Lolokou Sucker Frog), this protein is Esculentin-2-ALb.